Consider the following 202-residue polypeptide: Ig delta chain C region (202 aa).

The interval 32–58 is disordered; sequence KSKTFKLPETRNSQSSKKANPTPQAKN. Polar residues predominate over residues 41–56; that stretch reads TRNSQSSKKANPTPQA. An Ig-like domain is found at 66 to 178; sequence PTATKNIVGA…TKLNASKSLE (113 aa).

The chain is Ig delta chain C region from Rattus norvegicus (Rat).